The sequence spans 131 residues: Small ribosomal subunit protein uS8 (131 aa).

It belongs to the universal ribosomal protein uS8 family. As to quaternary structure, part of the 30S ribosomal subunit. Contacts proteins S5 and S12.

One of the primary rRNA binding proteins, it binds directly to 16S rRNA central domain where it helps coordinate assembly of the platform of the 30S subunit. This Helicobacter acinonychis (strain Sheeba) protein is Small ribosomal subunit protein uS8.